A 335-amino-acid chain; its full sequence is GTPase Obg (335 aa).

One can recognise an Obg domain in the interval 1 to 158 (MFVDQITLEL…RQVELELKLI (158 aa)). The disordered stretch occupies residues 126–145 (NTFFKTSVNRAPTKATPGKP). The OBG-type G domain maps to 159-334 (ADIGLVGFPN…LYRFFTQRLA (176 aa)). GTP-binding positions include 165-172 (GFPNAGKS), 190-194 (FTTLA), 215-218 (DIPG), 285-288 (NKID), and 315-317 (SGL). Serine 172 and threonine 192 together coordinate Mg(2+).

This sequence belongs to the TRAFAC class OBG-HflX-like GTPase superfamily. OBG GTPase family. As to quaternary structure, monomer. Mg(2+) serves as cofactor.

It is found in the cytoplasm. Its function is as follows. An essential GTPase which binds GTP, GDP and possibly (p)ppGpp with moderate affinity, with high nucleotide exchange rates and a fairly low GTP hydrolysis rate. Plays a role in control of the cell cycle, stress response, ribosome biogenesis and in those bacteria that undergo differentiation, in morphogenesis control. This Chlamydia pneumoniae (Chlamydophila pneumoniae) protein is GTPase Obg.